The sequence spans 1233 residues: Rho guanine nucleotide exchange factor 10-like protein (1233 aa).

The span at 1-10 (MASSNPPPQP) shows a compositional bias: pro residues. The tract at residues 1–93 (MASSNPPPQP…GTGVPAWVSN (93 aa)) is disordered. Acidic residues predominate over residues 26-46 (EAEDDPGEAFEFDDSDDEEDT). Ser40 is modified (phosphoserine). The span at 72–89 (PVTDPDPAAAPPGTGVPA) shows a compositional bias: low complexity. Phosphotyrosine occurs at positions 131 and 152. A disordered region spans residues 159–193 (GAPRQAEDLGWSSSEFESYSEDSGEEAKPEVEPAK). The segment covering 183–193 (EEAKPEVEPAK) has biased composition (basic and acidic residues). Ser240 bears the Phosphoserine mark. In terms of domain architecture, DH spans 275-462 (VRRHILGSIV…ETLAEKLNEQ (188 aa)). Positions 1089–1104 (QEEAEGPRAEEEKPDG) are enriched in basic and acidic residues. 2 disordered regions span residues 1089-1117 (QEEAEGPRAEEEKPDGQAHQPMPDSHVGR) and 1140-1161 (PLLSMREPAPADGAALEHSEED).

As to quaternary structure, interacts with RHOA, RHOB and RHOC.

The protein resides in the cytoplasm. Functionally, acts as a guanine nucleotide exchange factor (GEF) for RHOA, RHOB and RHOC. This chain is Rho guanine nucleotide exchange factor 10-like protein (ARHGEF10L), found in Pongo abelii (Sumatran orangutan).